The chain runs to 393 residues: Tryptophan 2,3-dioxygenase (393 aa).

Substrate contacts are provided by residues 56–60 and R127; that span reads FIVTH. Heme is bound at residue H312. Substrate is bound at residue T327.

Belongs to the tryptophan 2,3-dioxygenase family. In terms of assembly, homotetramer. Dimer of dimers. The cofactor is heme.

It carries out the reaction L-tryptophan + O2 = N-formyl-L-kynurenine. Its pathway is amino-acid degradation; L-tryptophan degradation via kynurenine pathway; L-kynurenine from L-tryptophan: step 1/2. It participates in pigment biosynthesis; ommochrome biosynthesis. Stimulated by low concentrations of hydrogen peroxide (5 uM), ascorbate (0.1-0.3 mM), and sodium hydrosulfite (0.1 mM). Inhibited by high concentrations of hydrogen peroxide (0.1 mM), ascorbate (10 mM), and sodium hydrosulfite (1 mM). Heme-dependent dioxygenase that catalyzes the oxidative cleavage of the L-tryptophan (L-Trp) pyrrole ring and converts L-tryptophan to N-formyl-L-kynurenine. Catalyzes the oxidative cleavage of the indole moiety. In Aedes aegypti (Yellowfever mosquito), this protein is Tryptophan 2,3-dioxygenase.